Here is an 834-residue protein sequence, read N- to C-terminus: Transcription intermediary factor 1-beta (834 aa).

At A2 the chain carries N-acetylalanine. Over residues 13 to 23 (AATAASAASGS) the composition is skewed to low complexity. Residues 13-56 (AATAASAASGSPGSGEGSAGGEKRPAASSAAAASAAASSPAGGG) are disordered. Residues S23, S26, and S30 each carry the phosphoserine modification. A Glycyl lysine isopeptide (Lys-Gly) (interchain with G-Cter in SUMO2) cross-link involves residue K35. The span at 38 to 52 (AASSAAAASAAASSP) shows a compositional bias: low complexity. At S51 the chain carries Phosphoserine. Residues 66–122 (CGVCRERLRPERDPRLLPCLHSACSACLGPATPAAANNSGDGGSAGDGAMVDCPVCK) form an RING-type zinc finger. Residue K128 forms a Glycyl lysine isopeptide (Lys-Gly) (interchain with G-Cter in SUMO2) linkage. At S139 the chain carries Phosphoserine. The B box-type 1 zinc finger occupies 149-196 (DANQCCTSCEDNAPATSYCVECSEPLCETCVEAHQRVKYTKDHTVRST). Zn(2+)-binding residues include C154, C157, C178, and H182. K200 is covalently cross-linked (Glycyl lysine isopeptide (Lys-Gly) (interchain with G-Cter in SUMO2)). The B box-type 2 zinc-finger motif lies at 205–246 (ERTVYCNVHKHEPLVLFCESCDTLTCRDCQLNAHKDHQYQFL). Zn(2+) is bound by residues C210, H213, C233, and H238. The tract at residues 247–377 (EDAVRNQRKL…LIYFQLHRAL (131 aa)) is leucine zipper alpha helical coiled-coil region. Positions 248–377 (DAVRNQRKLL…LIYFQLHRAL (130 aa)) are interaction with MAGEC2. Glycyl lysine isopeptide (Lys-Gly) (interchain with G-Cter in SUMO2) cross-links involve residues K255 and K262. K267 is subject to N6-acetyllysine. Residue K273 forms a Glycyl lysine isopeptide (Lys-Gly) (interchain with G-Cter in SUMO2) linkage. K305 is modified (N6-acetyllysine; alternate). K305 participates in a covalent cross-link: Glycyl lysine isopeptide (Lys-Gly) (interchain with G-Cter in SUMO2); alternate. K320 is covalently cross-linked (Glycyl lysine isopeptide (Lys-Gly) (interchain with G-Cter in SUMO2)). K341 carries the N6-acetyllysine modification. A Glycyl lysine isopeptide (Lys-Gly) (interchain with G-Cter in SUMO2) cross-link involves residue K367. The segment at 367-371 (KLIYF) is involved in binding PPP1CA. Position 378 is an N6-acetyllysine; alternate (K378). Residue K378 forms a Glycyl lysine isopeptide (Lys-Gly) (interchain with G-Cter in SUMO2); alternate linkage. K378 participates in a covalent cross-link: Glycyl lysine isopeptide (Lys-Gly) (interchain with G-Cter in SUMO1); alternate. K408 is covalently cross-linked (Glycyl lysine isopeptide (Lys-Gly) (interchain with G-Cter in SUMO2)). A disordered region spans residues 412-480 (ERPGTNSTGP…SRSGEGEVSG (69 aa)). S418 is modified (phosphoserine). Residue K435 forms a Glycyl lysine isopeptide (Lys-Gly) (interchain with G-Cter in SUMO2) linkage. Positions 435-444 (KQGSGSSQPM) are enriched in polar residues. Phosphoserine occurs at positions 438, 440, and 454. A Glycyl lysine isopeptide (Lys-Gly) (interchain with G-Cter in SUMO2); alternate cross-link involves residue K469. A Glycyl lysine isopeptide (Lys-Gly) (interchain with G-Cter in SUMO1); alternate cross-link involves residue K469. R470 carries the citrulline modification. S471 is modified (phosphoserine). R472 carries the citrulline modification. A phosphoserine mark is found at S473, S479, and S489. The tract at residues 476–513 (GEVSGLLRKVPRVSLERLDLDLTSDSQPPVFKVFPGST) is HP1 box. The PxVxL motif signature appears at 481–494 (LLRKVPRVSLERLD). T498 carries the post-translational modification Phosphothreonine. S501 bears the Phosphoserine mark. A Glycyl lysine isopeptide (Lys-Gly) (interchain with G-Cter in SUMO2) cross-link involves residue K507. K554 participates in a covalent cross-link: Glycyl lysine isopeptide (Lys-Gly) (interchain with G-Cter in SUMO2); alternate. K554 participates in a covalent cross-link: Glycyl lysine isopeptide (Lys-Gly) (interchain with G-Cter in SUMO); alternate. A Glycyl lysine isopeptide (Lys-Gly) (interchain with G-Cter in SUMO2) cross-link involves residue K575. The interval 581-602 (LTEGPGAEGPRLASPSGSTSSG) is disordered. Phosphoserine is present on S594. The segment at 625–672 (ATICRVCQKPGDLVMCNQCEFCFHLDCHLPALQDVPGEEWSCSLCHVL) adopts a PHD-type zinc-finger fold. A Glycyl lysine isopeptide (Lys-Gly) (interchain with G-Cter in SUMO) cross-link involves residue K676. 3 positions are modified to phosphoserine: S683, S689, and S697. In terms of domain architecture, Bromo spans 695–799 (KLSPANQRKC…RFFETRMNDA (105 aa)). K750 participates in a covalent cross-link: Glycyl lysine isopeptide (Lys-Gly) (interchain with G-Cter in SUMO2); alternate. K750 participates in a covalent cross-link: Glycyl lysine isopeptide (Lys-Gly) (interchain with G-Cter in SUMO1); alternate. K750 participates in a covalent cross-link: Glycyl lysine isopeptide (Lys-Gly) (interchain with G-Cter in SUMO); alternate. Residue S752 is modified to Phosphoserine. The residue at position 755 (Y755) is a Phosphotyrosine. Residue S757 is modified to Phosphoserine. N6-acetyllysine; alternate is present on residues K770, K774, and K779. Glycyl lysine isopeptide (Lys-Gly) (interchain with G-Cter in SUMO2); alternate cross-links involve residues K770, K774, and K779. K779 is covalently cross-linked (Glycyl lysine isopeptide (Lys-Gly) (interchain with G-Cter in SUMO1); alternate). At S784 the chain carries Phosphoserine. Residue K804 forms a Glycyl lysine isopeptide (Lys-Gly) (interchain with G-Cter in SUMO2) linkage. S824 is subject to Phosphoserine; by ATM and ATR and dsDNA kinase.

It belongs to the TRIM/RBCC family. In terms of assembly, oligomer; the RBCC domain homotrimerizes and interacts with one molecule of KRAB to form the KRAB-KAP1 corepressor complex. Interacts with SETX. Binding to a KRAB domain is an absolute requirement for silencing gene expression. Interacts with a number of KRAB-ZFP proteins including ZNF10, ZFP53, ZFP68, ZNF382 and ZNF256. Interacts with NCOR1, NR3C1 and CHD3. Interacts with CEBPB (via the RING-type and PHD-type zinc fingers). Interacts with CBX5 (via the PxVxL motif); the interaction occurs in interphase nuclei and competes for binding POGZ. Interacts with POGZ; the interaction competes for interaction with CBX5. Interacts with SETDB1; the interaction is enhanced by KAP1 sumoylation, stimulates SETDB1 histone methyltransferase activity and gene silencing. Interacts (via the PHD-type zinc finger) with UBE2I; the interaction is required for sumoylation and repressor activity. Component of the TRIM28/KAP1-ERBB4-MDM2 complex involved in connecting growth factor and DNA damage responses. Interacts directly with ERBB4; the interaction represses ERBB4-mediated transcription activity. Interacts with MDM2; the interaction contributes to p53/TP53 inactivation. Component of the TRIM28/KAP1-MDM2-p53/TP53; involved in regulating p53/TP53 stabilization and activity. Interacts (via the leucine zipper alpha helical coiled-coil) with E2F1 (central region); the interaction inhibits E2F1 acetylation and transcriptional activity. Interacts with PPP1CA; the interaction dephosphorylates TRIM28 at Ser-824 and forms a complex at the p21 promoter site. Interacts with PPP1CB; the interaction is weak but is increased on dephosphorylation at Ser-824. Interacts with CEBPB and NR3C1. Interacts with CBX5 (via the PxVxL motif); the interaction occurs in interphase nuclei and competes for binding POGZ. Component of a ternary complex that includes TRIM28, a HP1 protein (CBX1, CBX3 OR CBX5), a KRAB domain-containing protein, and DNA. Interacts with SMARCAD1. Interacts with, and sumoylates IRF7. Interacts with MAGEC2. Part of a complex composed of TRIM28, HDAC1, HDAC2 and EHMT2. Interacts (via the RBCC domain) with KOX1 (via the KRAB domain), ZNF268 (via the KRAB domain) and ZNF300 (via the KRAB domain); the interactions increase KOX1, ZNF268 and ZNF300 nuclear localization activities. Interacts with AICDA. The large PER complex involved in the histone methylation is composed of at least PER2, CBX3, TRIM28, SUV39H1 and/or SUV39H2; CBX3 mediates the formation of the complex. Interacts with NR4A3; the interactions potentiates NR4A3 activity on NurRE promoter. Interacts (unphosphorylated or phosphorylated form) with ZBTB1 (via BTB domain). Probably part of a corepressor complex containing ZNF304, TRIM28, SETDB1 and DNMT1. Interacts with ATRX. Forms a complex with ATRX, SETDB1 and ZNF274. Interacts with ZFP568; the interaction mediates ZFP568 transcriptional repression activity. Interacts with RRP1B. Interacts with CRY1. Interacts with ZNF263; recruited to the SIX3 promoter along with other proteins involved in chromatin modification and transcriptional corepression where it contributes to transcriptional repression. Interacts with CYREN (via XLF motif). Interacts with TRIM17; this interaction prevents TRIM28 activity. Interacts with ZNF746. Interacts with PHF13. Interacts with ZNF354C. Interacts with ZNF432; the interaction is independent of PARP1. Post-translationally, ATM-induced phosphorylation on Ser-824 represses sumoylation leading to the de-repression of expression of a subset of genes involved in cell cycle control and apoptosis in response to genotoxic stress. Dephosphorylation by the phosphatases, PPP1CA and PP1CB forms, allows sumoylation and expression of TRIM28 target genes. In terms of processing, sumoylation/desumoylation events regulate TRIM28-mediated transcriptional repression. Sumoylation is required for interaction with CHD3 and SETDB1 and the corepressor activity. Represses and is repressed by Ser-824 phosphorylation. Enhances the TRIM28 corepressor activity, inhibiting transcriptional activity of a number of genes including GADD45A and CDKN1A/p21. Lys-554, Lys-779 and Lys-804 are the major sites of sumoylation. In response to Dox-induced DNA damage, enhanced phosphorylation on Ser-824 prevents sumoylation and allows de-repression of CDKN1A/p21. Auto-ubiquitinated; enhanced by MAGEA2 and MAGEC2. Post-translationally, citrullinated by PADI4. In terms of processing, ADP-ribosylated by SIRT6, promoting TRIM28/KAP1 interaction with CBX5, thereby contributing to the packaging of LINE-1 retrotransposon elements into transcriptionally repressive heterochromatin.

The protein localises to the nucleus. It catalyses the reaction S-ubiquitinyl-[E2 ubiquitin-conjugating enzyme]-L-cysteine + [acceptor protein]-L-lysine = [E2 ubiquitin-conjugating enzyme]-L-cysteine + N(6)-ubiquitinyl-[acceptor protein]-L-lysine.. It functions in the pathway protein modification; protein sumoylation. In terms of biological role, nuclear corepressor for KRAB domain-containing zinc finger proteins (KRAB-ZFPs). Mediates gene silencing by recruiting CHD3, a subunit of the nucleosome remodeling and deacetylation (NuRD) complex, and SETDB1 (which specifically methylates histone H3 at 'Lys-9' (H3K9me)) to the promoter regions of KRAB target genes. Enhances transcriptional repression by coordinating the increase in H3K9me, the decrease in histone H3 'Lys-9 and 'Lys-14' acetylation (H3K9ac and H3K14ac, respectively) and the disposition of HP1 proteins to silence gene expression. Recruitment of SETDB1 induces heterochromatinization. May play a role as a coactivator for CEBPB and NR3C1 in the transcriptional activation of ORM1. Also a corepressor for ERBB4. Inhibits E2F1 activity by stimulating E2F1-HDAC1 complex formation and inhibiting E2F1 acetylation. May serve as a partial backup to prevent E2F1-mediated apoptosis in the absence of RB1. Important regulator of CDKN1A/p21(CIP1). Has E3 SUMO-protein ligase activity toward itself via its PHD-type zinc finger. Specifically sumoylates IRF7, thereby inhibiting its transactivation activity. Ubiquitinates p53/TP53 leading to its proteasomal degradation; the function is enhanced by MAGEC2 and MAGEA2, and possibly MAGEA3 and MAGEA6. Mediates the nuclear localization of KOX1, ZNF268 and ZNF300 transcription factors. Probably forms a corepressor complex required for activated KRAS-mediated promoter hypermethylation and transcriptional silencing of tumor suppressor genes (TSGs) or other tumor-related genes in colorectal cancer (CRC) cells. Required to maintain a transcriptionally repressive state of genes in undifferentiated embryonic stem cells (ESCs). In ESCs, in collaboration with SETDB1, is also required for H3K9me3 and silencing of endogenous and introduced retroviruses in a DNA-methylation independent-pathway. Associates at promoter regions of tumor suppressor genes (TSGs) leading to their gene silencing. The SETDB1-TRIM28-ZNF274 complex may play a role in recruiting ATRX to the 3'-exons of zinc-finger coding genes with atypical chromatin signatures to establish or maintain/protect H3K9me3 at these transcriptionally active regions. Acts as a corepressor for ZFP568. The sequence is that of Transcription intermediary factor 1-beta from Mus musculus (Mouse).